The following is a 254-amino-acid chain: Major prion protein (254 aa).

Positions 1-22 (MANLGYWLLALFVATWTDVGLC) are cleaved as a signal peptide. The interval 23–231 (KKRPKPGGWN…SQAYYDGRRS (209 aa)) is interaction with GRB2, ERI3 and SYN1. Residues 25–107 (RPKPGGWNTG…QWNKPSKPKT (83 aa)) form a disordered region. A run of 5 repeats spans residues 51–59 (PQGGGTWGQ), 60–67 (PHGGGWGQ), 68–75 (PHGGGWGQ), 76–83 (PHGGGWGQ), and 84–91 (PHGGGWGQ). The interval 51–91 (PQGGGTWGQPHGGGWGQPHGGGWGQPHGGGWGQPHGGGWGQ) is 5 X 8 AA tandem repeats of P-H-G-G-G-W-G-Q. The span at 52-95 (QGGGTWGQPHGGGWGQPHGGGWGQPHGGGWGQPHGGGWGQGGGT) shows a compositional bias: gly residues. Residues H61, G62, G63, H69, G70, G71, H77, G78, G79, H85, G86, and G87 each coordinate Cu(2+). Residues C179 and C214 are joined by a disulfide bond. N181 and N197 each carry an N-linked (GlcNAc...) asparagine glycan. Residue S231 is the site of GPI-anchor amidated serine attachment. Residues 232–254 (SAVLFSSPPMILLISFLIFLIVG) constitute a propeptide, removed in mature form.

This sequence belongs to the prion family. In terms of assembly, monomer and homodimer. Has a tendency to aggregate into amyloid fibrils containing a cross-beta spine, formed by a steric zipper of superposed beta-strands. Soluble oligomers may represent an intermediate stage on the path to fibril formation. Copper binding may promote oligomerization. Interacts with GRB2, APP, ERI3/PRNPIP and SYN1. Mislocalized cytosolically exposed PrP interacts with MGRN1; this interaction alters MGRN1 subcellular location and causes lysosomal enlargement. Interacts with KIAA1191.

The protein localises to the cell membrane. It is found in the golgi apparatus. Its function is as follows. Its primary physiological function is unclear. Has cytoprotective activity against internal or environmental stresses. May play a role in neuronal development and synaptic plasticity. May be required for neuronal myelin sheath maintenance. May play a role in iron uptake and iron homeostasis. Soluble oligomers are toxic to cultured neuroblastoma cells and induce apoptosis (in vitro). Association with GPC1 (via its heparan sulfate chains) targets PRNP to lipid rafts. Also provides Cu(2+) or Zn(2+) for the ascorbate-mediated GPC1 deaminase degradation of its heparan sulfate side chains. In Sigmodon hispidus (Hispid cotton rat), this protein is Major prion protein (PRNP).